Consider the following 299-residue polypeptide: Leucine zipper transcription factor-like protein 1 (299 aa).

Residues 96–299 (LKLQTDISEL…KRLAKYESED (204 aa)) are a coiled coil. The tract at residues 145-299 (GTTELLNKEI…KRLAKYESED (155 aa)) is interaction with BSS9.

This sequence belongs to the LZTFL1 family. In terms of assembly, self-associates. Interacts with BBS9; the interaction mediates the association of LZTL1 with the BBsome complex and regulates BBSome ciliary trafficking. In terms of tissue distribution, highly expressed in testis. Expressed in brain, cerebellum, eye, heart, kidney, liver, lung and trachea. In small intestine, graded expression along the crypt-villus axis with high levels in the villus apex and lower levels in the crypt stem cells (at protein level). Not expressed in skeletal muscle and white adipose tissue.

The protein resides in the cytoplasm. Its function is as follows. Regulates ciliary localization of the BBSome complex. Together with the BBSome complex, controls SMO ciliary trafficking and contributes to the sonic hedgehog (SHH) pathway regulation. May play a role in neurite outgrowth. May have tumor suppressor function. This Mus musculus (Mouse) protein is Leucine zipper transcription factor-like protein 1 (Lztfl1).